The primary structure comprises 239 residues: ATP-dependent dethiobiotin synthetase BioD (239 aa).

Residue 15 to 20 coordinates ATP; that stretch reads EIGKTF. Residue threonine 19 participates in Mg(2+) binding. The active site involves lysine 40. ATP contacts are provided by residues aspartate 57, 118–121, and 178–179; these read EGAG and NH. Aspartate 57 and glutamate 118 together coordinate Mg(2+).

The protein belongs to the dethiobiotin synthetase family. As to quaternary structure, homodimer. Requires Mg(2+) as cofactor.

It localises to the cytoplasm. It carries out the reaction (7R,8S)-7,8-diammoniononanoate + CO2 + ATP = (4R,5S)-dethiobiotin + ADP + phosphate + 3 H(+). Its pathway is cofactor biosynthesis; biotin biosynthesis; biotin from 7,8-diaminononanoate: step 1/2. Functionally, catalyzes a mechanistically unusual reaction, the ATP-dependent insertion of CO2 between the N7 and N8 nitrogen atoms of 7,8-diaminopelargonic acid (DAPA, also called 7,8-diammoniononanoate) to form a ureido ring. This Burkholderia lata (strain ATCC 17760 / DSM 23089 / LMG 22485 / NCIMB 9086 / R18194 / 383) protein is ATP-dependent dethiobiotin synthetase BioD.